Reading from the N-terminus, the 330-residue chain is Carbonic anhydrase (330 aa).

Residues 1–109 form a chloroplast transit peptide-like region; the sequence is MSTASAFATN…AAARIDQITA (109 aa).

This sequence belongs to the beta-class carbonic anhydrase family.

It localises to the cytoplasm. It carries out the reaction hydrogencarbonate + H(+) = CO2 + H2O. Reversible hydration of carbon dioxide. This Flaveria brownii (Brown's yellowtops) protein is Carbonic anhydrase.